A 113-amino-acid chain; its full sequence is Probable 4-amino-4-deoxy-L-arabinose-phosphoundecaprenol flippase subunit ArnE (113 aa).

3 consecutive transmembrane segments (helical) span residues isoleucine 39–leucine 59, isoleucine 62–isoleucine 82, and valine 91–methionine 111. The EamA domain maps to leucine 42–methionine 111.

The protein belongs to the ArnE family. As to quaternary structure, heterodimer of ArnE and ArnF.

The protein resides in the cell inner membrane. The protein operates within bacterial outer membrane biogenesis; lipopolysaccharide biosynthesis. Translocates 4-amino-4-deoxy-L-arabinose-phosphoundecaprenol (alpha-L-Ara4N-phosphoundecaprenol) from the cytoplasmic to the periplasmic side of the inner membrane. The chain is Probable 4-amino-4-deoxy-L-arabinose-phosphoundecaprenol flippase subunit ArnE from Proteus mirabilis (strain HI4320).